We begin with the raw amino-acid sequence, 551 residues long: Chaperonin GroEL 2 (551 aa).

ATP-binding positions include 30 to 33, Lys-51, 87 to 91, Gly-415, and Asp-496; these read TLGP and DGTTT.

This sequence belongs to the chaperonin (HSP60) family. Forms a cylinder of 14 subunits composed of two heptameric rings stacked back-to-back. Interacts with the co-chaperonin GroES.

The protein resides in the cytoplasm. It carries out the reaction ATP + H2O + a folded polypeptide = ADP + phosphate + an unfolded polypeptide.. In terms of biological role, together with its co-chaperonin GroES, plays an essential role in assisting protein folding. The GroEL-GroES system forms a nano-cage that allows encapsulation of the non-native substrate proteins and provides a physical environment optimized to promote and accelerate protein folding. The polypeptide is Chaperonin GroEL 2 (Rhodopseudomonas palustris (strain BisB18)).